The chain runs to 530 residues: MRRLWGAARKPSGAGWEKEWAEAPQEAPGAWSGRLGPGRSGRKGRAVPGWASWPAHLALAARPARHLGGAGQGPRPLDSGTAPFHSRASGERQRRLEPQLQHESRCRSSTPADAWRAEAALPVRAMGAPWGSPTAAAGGRRRWRRGRGLPWTVCVLAAAGLTCTALITYACWGQLPPLPWASPTPSRPVGVLLWWEPFAGRHSAPRPPPDCRLRFNISGCRLLTDRASYGEAQAVLFHHRDLVKGPPDWPPPWGVQAHTAEEVDLRVLDYEEAAAAAEALATSSPRPPGQRWVWMNFESPSHSPGLRSLASNLFNWTLSYRADSDVFVPYGYLYPRSHPGDPPSGLAPPLSRKQGLVAWVVSHWDERQARVRYYHQLSQHVTVDVFGRGGPGQPVPEIGLLHTVARYKFYLAFENSQHLDYITEKLWRNALLAGAVPVVLGPDRANYERFVPRGAFIHVDDFPSASSLASYLLFLDRNPAVYRRYFHWRRSYAVHITSFWDEPWCRVCQAVQRAGDRPKSIRNLASWFER.

Disordered stretches follow at residues 1–48 and 66–113; these read MRRL…RAVP and HLGG…TPAD. Residues 1 to 147 lie on the Cytoplasmic side of the membrane; sequence MRRLWGAARK…GGRRRWRRGR (147 aa). Residues 88-106 show a composition bias toward basic and acidic residues; sequence ASGERQRRLEPQLQHESRC. The chain crosses the membrane as a helical; Signal-anchor for type II membrane protein span at residues 148 to 172; that stretch reads GLPWTVCVLAAAGLTCTALITYACW. Residues 173-530 are Lumenal-facing; it reads GQLPPLPWAS…IRNLASWFER (358 aa). Residues Asn216 and Asn315 are each glycosylated (N-linked (GlcNAc...) asparagine).

The protein belongs to the glycosyltransferase 10 family.

It is found in the golgi apparatus. It localises to the golgi stack membrane. It catalyses the reaction a beta-D-galactosyl-(1-&gt;4)-N-acetyl-beta-D-glucosaminyl derivative + GDP-beta-L-fucose = a beta-D-galactosyl-(1-&gt;4)-[alpha-L-fucosyl-(1-&gt;3)]-N-acetyl-beta-D-glucosaminyl derivative + GDP + H(+). The catalysed reaction is an N-acetyl-alpha-neuraminyl-(2-&gt;3)-beta-D-galactosyl-(1-&gt;4)-N-acetyl-beta-D-glucosaminyl derivative + GDP-beta-L-fucose = an alpha-Neu5Ac-(2-&gt;3)-beta-D-Gal-(1-&gt;4)-[alpha-L-Fuc-(1-&gt;3)]-beta-D-GlcNAc derivative + GDP + H(+). The enzyme catalyses an alpha-Neu5Ac-(2-&gt;3)-beta-D-Gal-(1-&gt;4)-beta-D-GlcNAc-(1-&gt;3)-beta-D-Gal-(1-&gt;4)-beta-D-GlcNAc derivative + GDP-beta-L-fucose = an alpha-Neu5Ac-(2-&gt;3)-beta-D-Gal-(1-&gt;4)-beta-D-GlcNAc-(1-&gt;3)-beta-D-Gal-(1-&gt;4)-[alpha-L-Fuc-(1-&gt;3)]-beta-D-GlcNAc derivative + GDP + H(+). It carries out the reaction an alpha-Neu5Ac-(2-&gt;3)-beta-D-Gal-(1-&gt;4)-beta-D-GlcNAc6S derivative + GDP-beta-L-fucose = an alpha-Neu5Ac-(2-&gt;3)-beta-D-Gal-(1-&gt;4)-[alpha-L-Fuc-(1-&gt;3)]-beta-D-GlcNAc6S derivative + GDP + H(+). Its pathway is protein modification; protein glycosylation. Functionally, catalyzes alpha(1-&gt;3) linkage of fucosyl moiety transferred from GDP-beta-L-fucose to N-acetyl glucosamine (GlcNAc) within type 2 lactosamine (LacNAc, Gal-beta(1-&gt;4)GlcNAc) glycan attached to N- or O-linked glycoproteins. Robustly fucosylates nonsialylated distal LacNAc unit of the polylactosamine chain to form Lewis X antigen (CD15), a glycan determinant known to mediate important cellular functions in development and immunity. Fucosylates with lower efficiency sialylated LacNAc acceptors to form sialyl Lewis X and 6-sulfo sialyl Lewis X determinants that serve as recognition epitopes for C-type lectins. Together with FUT7 contributes to SELE, SELL and SELP selectin ligand biosynthesis and selectin-dependent lymphocyte homing, leukocyte migration and blood leukocyte homeostasis. In a cell type specific manner, may also fucosylate the internal LacNAc unit of the polylactosamine chain to form VIM-2 antigen that serves as recognition epitope for SELE. This is Alpha-(1,3)-fucosyltransferase 4 (FUT4) from Pan troglodytes (Chimpanzee).